A 159-amino-acid polypeptide reads, in one-letter code: Aspartate carbamoyltransferase regulatory chain (159 aa).

Zn(2+) contacts are provided by Cys113, Cys118, Cys142, and Cys145.

Belongs to the PyrI family. As to quaternary structure, contains catalytic and regulatory chains. The cofactor is Zn(2+).

Functionally, involved in allosteric regulation of aspartate carbamoyltransferase. The chain is Aspartate carbamoyltransferase regulatory chain from Saccharolobus islandicus (strain Y.N.15.51 / Yellowstone #2) (Sulfolobus islandicus).